The following is a 307-amino-acid chain: Manganese-dependent inorganic pyrophosphatase (307 aa).

Mn(2+) is bound by residues His-7, Asp-11, Asp-13, Asp-66, His-88, and Asp-147.

Mn(2+) serves as cofactor.

It localises to the cytoplasm. The enzyme catalyses diphosphate + H2O = 2 phosphate + H(+). The chain is Manganese-dependent inorganic pyrophosphatase (ppaC) from Methanocaldococcus jannaschii (strain ATCC 43067 / DSM 2661 / JAL-1 / JCM 10045 / NBRC 100440) (Methanococcus jannaschii).